We begin with the raw amino-acid sequence, 513 residues long: Na(+)/H(+) antiporter NhaB (513 aa).

The next 12 helical transmembrane spans lie at 23 to 43 (LALI…PFVA), 52 to 72 (IFTL…LLAI), 97 to 117 (LLLM…LFIF), 120 to 140 (LLLS…AAAF), 144 to 164 (FLDA…FYGI), 202 to 222 (LMMH…VGEP), 238 to 258 (FFLR…LTCL), 303 to 323 (AIIG…VGLI), 348 to 368 (TESL…AVII), 391 to 411 (LFYI…VGTI), 447 to 467 (ATPN…APLI), and 475 to 495 (VWMA…CVEF).

Belongs to the NhaB Na(+)/H(+) (TC 2.A.34) antiporter family.

It is found in the cell inner membrane. The catalysed reaction is 2 Na(+)(in) + 3 H(+)(out) = 2 Na(+)(out) + 3 H(+)(in). Its function is as follows. Na(+)/H(+) antiporter that extrudes sodium in exchange for external protons. The sequence is that of Na(+)/H(+) antiporter NhaB from Escherichia coli O127:H6 (strain E2348/69 / EPEC).